Here is a 124-residue protein sequence, read N- to C-terminus: Small ribosomal subunit protein uS12 (124 aa).

3-methylthioaspartic acid is present on Asp89.

The protein belongs to the universal ribosomal protein uS12 family. In terms of assembly, part of the 30S ribosomal subunit. Contacts proteins S8 and S17. May interact with IF1 in the 30S initiation complex.

With S4 and S5 plays an important role in translational accuracy. In terms of biological role, interacts with and stabilizes bases of the 16S rRNA that are involved in tRNA selection in the A site and with the mRNA backbone. Located at the interface of the 30S and 50S subunits, it traverses the body of the 30S subunit contacting proteins on the other side and probably holding the rRNA structure together. The combined cluster of proteins S8, S12 and S17 appears to hold together the shoulder and platform of the 30S subunit. In Blochmanniella pennsylvanica (strain BPEN), this protein is Small ribosomal subunit protein uS12.